The following is an 88-amino-acid chain: Beta-insect excitatory toxin 1 (88 aa).

Positions 1–18 are cleaved as a signal peptide; it reads MKFLLLFLVVLPIMGVFG. Residues 20 to 83 form the LCN-type CS-alpha/beta domain; sequence KNGYAVDSSG…ISDTRKSYCD (64 aa). Cystine bridges form between cysteine 34/cysteine 55, cysteine 40/cysteine 60, cysteine 44/cysteine 62, and cysteine 56/cysteine 82.

The protein belongs to the long (4 C-C) scorpion toxin superfamily. Sodium channel inhibitor family. Beta subfamily. Expressed by the venom gland.

It is found in the secreted. Its function is as follows. Excitatory insect beta-toxins induce a spastic paralysis. They bind voltage-independently at site-4 of sodium channels (Nav) and shift the voltage of activation toward more negative potentials thereby affecting sodium channel activation and promoting spontaneous and repetitive firing. This toxin is active only on insects. The protein is Beta-insect excitatory toxin 1 of Androctonus australis (Sahara scorpion).